Reading from the N-terminus, the 264-residue chain is Acyl-[acyl-carrier-protein]--UDP-N-acetylglucosamine O-acyltransferase (264 aa).

It belongs to the transferase hexapeptide repeat family. LpxA subfamily. Homotrimer.

The protein localises to the cytoplasm. The enzyme catalyses a (3R)-hydroxyacyl-[ACP] + UDP-N-acetyl-alpha-D-glucosamine = a UDP-3-O-[(3R)-3-hydroxyacyl]-N-acetyl-alpha-D-glucosamine + holo-[ACP]. Its pathway is glycolipid biosynthesis; lipid IV(A) biosynthesis; lipid IV(A) from (3R)-3-hydroxytetradecanoyl-[acyl-carrier-protein] and UDP-N-acetyl-alpha-D-glucosamine: step 1/6. Functionally, involved in the biosynthesis of lipid A, a phosphorylated glycolipid that anchors the lipopolysaccharide to the outer membrane of the cell. The protein is Acyl-[acyl-carrier-protein]--UDP-N-acetylglucosamine O-acyltransferase of Chlorobium phaeobacteroides (strain DSM 266 / SMG 266 / 2430).